The chain runs to 213 residues: ATP phosphoribosyltransferase (213 aa).

Belongs to the ATP phosphoribosyltransferase family. Short subfamily. In terms of assembly, heteromultimer composed of HisG and HisZ subunits.

The protein localises to the cytoplasm. It catalyses the reaction 1-(5-phospho-beta-D-ribosyl)-ATP + diphosphate = 5-phospho-alpha-D-ribose 1-diphosphate + ATP. It participates in amino-acid biosynthesis; L-histidine biosynthesis; L-histidine from 5-phospho-alpha-D-ribose 1-diphosphate: step 1/9. Functionally, catalyzes the condensation of ATP and 5-phosphoribose 1-diphosphate to form N'-(5'-phosphoribosyl)-ATP (PR-ATP). Has a crucial role in the pathway because the rate of histidine biosynthesis seems to be controlled primarily by regulation of HisG enzymatic activity. This Bacillus pumilus (strain SAFR-032) protein is ATP phosphoribosyltransferase.